A 214-amino-acid chain; its full sequence is ATP-dependent Clp protease proteolytic subunit (214 aa).

The active-site Nucleophile is the S106. H131 is an active-site residue.

This sequence belongs to the peptidase S14 family. As to quaternary structure, fourteen ClpP subunits assemble into 2 heptameric rings which stack back to back to give a disk-like structure with a central cavity, resembling the structure of eukaryotic proteasomes.

The protein resides in the cytoplasm. It carries out the reaction Hydrolysis of proteins to small peptides in the presence of ATP and magnesium. alpha-casein is the usual test substrate. In the absence of ATP, only oligopeptides shorter than five residues are hydrolyzed (such as succinyl-Leu-Tyr-|-NHMec, and Leu-Tyr-Leu-|-Tyr-Trp, in which cleavage of the -Tyr-|-Leu- and -Tyr-|-Trp bonds also occurs).. In terms of biological role, cleaves peptides in various proteins in a process that requires ATP hydrolysis. Has a chymotrypsin-like activity. Plays a major role in the degradation of misfolded proteins. The protein is ATP-dependent Clp protease proteolytic subunit of Rhodopseudomonas palustris (strain BisB5).